Consider the following 806-residue polypeptide: Volume-regulated anion channel subunit LRRC8E (806 aa).

At 1 to 22 the chain is on the cytoplasmic side; that stretch reads MIPVAEFKQFTEQQPAFKVLKP. The helical transmembrane segment at 23–43 threads the bilayer; sequence WWDVLAEYITYAMLMIGVFGC. The Extracellular portion of the chain corresponds to 44–130; sequence TLQVTQDKII…YETALHWYAK (87 aa). C54 and C311 are joined by a disulfide. N-linked (GlcNAc...) asparagine glycosylation is found at N57 and N80. Positions 72–81 are enriched in polar residues; that stretch reads YDQQSPPSND. Positions 72–103 are disordered; the sequence is YDQQSPPSNDSDLETTIPPPTATSSPPREMSG. The helical transmembrane segment at 131–151 threads the bilayer; that stretch reads YFPYLVVIHTLIFIICGNFWF. At 152 to 275 the chain is on the cytoplasmic side; sequence KFPGTSSKIE…MRQTVLKVCK (124 aa). Positions 182 to 213 are disordered; it reads EVSGESSQEKPSQERSIDRELSKPNFEEGSPA. The segment covering 188 to 207 has biased composition (basic and acidic residues); it reads SQEKPSQERSIDRELSKPNF. A helical membrane pass occupies residues 276–296; it reads FVLITIYNAVLVGKIHFIVPC. Residues 297 to 323 lie on the Extracellular side of the membrane; sequence SVHTEDMTGYNSFCCNHTKAHLFSKLA. Residue N312 is glycosylated (N-linked (GlcNAc...) asparagine). Residues 324-344 form a helical membrane-spanning segment; it reads ITYLCFLGVYGLTCLYTLYWL. The Cytoplasmic segment spans residues 345–806; it reads FRRPLKEYSF…VEVRDKLKED (462 aa). LRR repeat units lie at residues 544–566, 569–589, 593–614, 616–637, 641–662, 664–685, 687–708, 710–731, 733–754, and 756–777; these read LKSLKVLTIKSNLSKIPATVADV, HLQKFSIHNDGTKLLTLNALK, LVKELELVRCELERIPHAVFSL, NLQVLDLKENTLHTIEEIISLQ, KLSVLRLWHNQIAYIPEHIRKL, GLEELSLNRNKILVIPSQLFLC, KLRHLDLSNNEIRELPPEIGVL, LLQYLGLSGNFLEDLPNELFFC, KLKTLKLGQNRLGNLSPKVGSL, and CLVKLELKGNRMDTLPPELGNC.

This sequence belongs to the LRRC8 family. As to quaternary structure, heterohexamer; oligomerizes with other LRRC8 proteins (lrrc8a, lrrc8c, lrrc8d and/or lrrc8b) to form a heterohexamer. Detected in a channel complex that contains lrrc8a, lrrc8c and lrrc8e. In vivo, the subunit composition may depend primarily on expression levels, and heterooligomeric channels containing various proportions of the different LRRC8 proteins may coexist.

The protein resides in the cell membrane. It localises to the endoplasmic reticulum membrane. The protein localises to the lysosome membrane. The catalysed reaction is chloride(in) = chloride(out). The enzyme catalyses iodide(out) = iodide(in). It catalyses the reaction taurine(out) = taurine(in). It carries out the reaction 2',3'-cGAMP(out) = 2',3'-cGAMP(in). In terms of biological role, non-essential component of the volume-regulated anion channel (VRAC, also named VSOAC channel), an anion channel required to maintain a constant cell volume in response to extracellular or intracellular osmotic changes. The VRAC channel conducts iodide better than chloride and can also conduct organic osmolytes like taurine. Mediates efflux of amino acids, such as aspartate, in response to osmotic stress. The VRAC channel also mediates transport of immunoreactive cyclic dinucleotide GMP-AMP (2'-3'-cGAMP), an immune messenger produced in response to DNA virus in the cytosol. Channel activity requires lrrc8a plus at least one other family member (lrrc8b, lrrc8c, lrrc8d or lrrc8e); channel characteristics depend on the precise subunit composition. Also plays a role in lysosome homeostasis by forming functional lysosomal VRAC channels in response to low cytoplasmic ionic strength condition: lysosomal VRAC channels are necessary for the formation of large lysosome-derived vacuoles, which store and then expel excess water to maintain cytosolic water homeostasis. This Xenopus tropicalis (Western clawed frog) protein is Volume-regulated anion channel subunit LRRC8E.